The sequence spans 477 residues: D-alanyl-D-alanine carboxypeptidase DacB (477 aa).

Positions methionine 1–alanine 20 are cleaved as a signal peptide. Serine 62 acts as the Acyl-ester intermediate in catalysis. The active-site Proton acceptor is the lysine 65. The absent in class-A beta-lactamases stretch occupies residues glycine 90–leucine 263. The active site involves serine 306. Lysine 417 is a substrate binding site.

Belongs to the peptidase S13 family.

The protein localises to the periplasm. The enzyme catalyses Preferential cleavage: (Ac)2-L-Lys-D-Ala-|-D-Ala. Also transpeptidation of peptidyl-alanyl moieties that are N-acyl substituents of D-alanine.. Its pathway is cell wall biogenesis; peptidoglycan biosynthesis. Its function is as follows. Not involved in transpeptidation but exclusively catalyzes a DD-carboxypeptidase and DD-endopeptidase reaction. The protein is D-alanyl-D-alanine carboxypeptidase DacB (dacB) of Escherichia coli (strain K12).